Consider the following 651-residue polypeptide: MGKKHKKHKSDKHLYEEYVEKPLKLVLKVGGNEVTELSTGSSGHDSSLFEDKNDHDKHKDRKRKKRKKGEKQIPGEEKGRKRRRVKEDKKKRDRDRVENEAEKDLQCHAPVRLDLPPEKPLTSSLAKQEEVEQTPLQEALNQLMRQLQRKDPSAFFSFPVTDFIAPGYSMIIKHPMDFSTMKEKIKNNDYQSIEELKDNFKLMCTNAMIYNKPETIYYKAAKKLLHSGMKILSQERIQSLKQSIDFMADLQKTRKQKDGTDTSQSGEDGGCWQREREDSGDAEAHASKSPSKENKKKDNDMLEDKFKSNNLEREQEQLDRIVKESGGKLTRRLVNSQCEFERRKPDGTTTLGLLHPVDPIVGEPGYCPVRLGMTTGRLQSGVNTLQGFKEDKRNKVTPVLYLNYGPYSSYAPHYDSTFANISKDDSDLIYSTYGEDSDLPSDFSIHEFLATCQDYPYVMADSLLDVLTKGGHSRTLQEMEMSLPEDEGHTRTLDTAKEMEITEVEPPGRLDSSTQDRLIALKAVTNFGVPVEVFDSEEAEIFQKKLDETTRLLRELQEAQNERLSTRPPPNMICLLGPSYREMHLAEQVTNNLKELAQQVTPGDIVSTYGVRKAMGISIPSPVMENNFVDLTEDTEEPKKTDVAECGPGGS.

K21 is covalently cross-linked (Glycyl lysine isopeptide (Lys-Gly) (interchain with G-Cter in SUMO2)). Over residues T35–D45 the composition is skewed to polar residues. Positions T35 to E132 are disordered. Residues S47–K57 are compositionally biased toward basic and acidic residues. K52 participates in a covalent cross-link: Glycyl lysine isopeptide (Lys-Gly) (interchain with G-Cter in SUMO2). Residues H58–G69 show a composition bias toward basic residues. The short motif at K65–R96 is the Nuclear localization signal element. Over residues E70 to Q106 the composition is skewed to basic and acidic residues. Residues K127, K186, K197, K201, K212, and K241 each participate in a glycyl lysine isopeptide (Lys-Gly) (interchain with G-Cter in SUMO2) cross-link. Positions V131 to E235 constitute a Bromo domain. The disordered stretch occupies residues T253–E312. A compositionally biased stretch (basic and acidic residues) spans Q273–E312. Phosphoserine occurs at positions 279 and 289. Glycyl lysine isopeptide (Lys-Gly) (interchain with G-Cter in SUMO2) cross-links involve residues K305 and K307. Position 328 is an N6-acetyllysine (K328). Residue K344 forms a Glycyl lysine isopeptide (Lys-Gly) (interchain with G-Cter in SUMO2) linkage. S380 carries the phosphoserine modification. A Glycyl lysine isopeptide (Lys-Gly) (interchain with G-Cter in SUMO2) cross-link involves residue K389. S482 bears the Phosphoserine mark. T514 bears the Phosphothreonine mark. The stretch at S536–R567 forms a coiled coil. S621 is subject to Phosphoserine.

In terms of assembly, interacts with TRIM24, PTPN13 and DVL1. Identified in a complex with SMARCA4/BRG1, SMARCC1/BAF155, SMARCE1/BAF57, DPF2/BAF45D and ARID2, subunits of the SWI/SNF-B (PBAF) chromatin remodeling complex. Interacts with IRF2 and HNRPUL1. Interacts (via N-terminus) with TP53. Interacts (via C-terminus) with EP300. Interacts with BRCA1. Interacts (via bromo domain) with histone H3 (via N-terminus) acetylated at 'Lys-14' (H3K14ac). Has low affinity for histone H3 acetylated at 'Lys-9' (H3K9ac). Has the highest affinity for histone H3 that is acetylated both at 'Lys-9' (H3K9ac) and at 'Lys-14' (H3K14ac). Has very low affinity for non-acetylated histone H3. Interacts (via bromo domain) with histone H4 (via N-terminus) acetylated at 'Lys-8' (H3K8ac) (in vitro).

The protein localises to the nucleus. Its subcellular location is the chromosome. Acts both as coactivator and as corepressor. May play a role in chromatin remodeling. Activator of the Wnt signaling pathway in a DVL1-dependent manner by negatively regulating the GSK3B phosphotransferase activity. Induces dephosphorylation of GSK3B at 'Tyr-216'. Down-regulates TRIM24-mediated activation of transcriptional activation by AR. Transcriptional corepressor that down-regulates the expression of target genes. Binds to target promoters, leading to increased histone H3 acetylation at 'Lys-9' (H3K9ac). Binds to the ESR1 promoter. Recruits BRCA1 and POU2F1 to the ESR1 promoter. Coactivator for TP53-mediated activation of transcription of a set of target genes. Required for TP53-mediated cell-cycle arrest in response to oncogene activation. Promotes acetylation of TP53 at 'Lys-382', and thereby promotes efficient recruitment of TP53 to target promoters. Inhibits cell cycle progression from G1 to S phase. The polypeptide is Bromodomain-containing protein 7 (BRD7) (Pongo abelii (Sumatran orangutan)).